We begin with the raw amino-acid sequence, 79 residues long: U1-plectoxin-Pt1c (79 aa).

An N-terminal signal peptide occupies residues 1–18 (HLILASALICALVVCTFA). Positions 19–31 (EEQVNVPFLPDER) are excised as a propeptide. 5 disulfides stabilise this stretch: cysteine 35–cysteine 49, cysteine 42–cysteine 55, cysteine 48–cysteine 66, cysteine 52–cysteine 75, and cysteine 57–cysteine 64. A propeptide spanning residues 78–79 (RR) is cleaved from the precursor.

The protein belongs to the neurotoxin 02 (plectoxin) family. 02 (plectoxin) subfamily. In terms of tissue distribution, expressed by the venom gland.

The protein localises to the secreted. Functionally, potent toxin that may paralyze and/or kill insect pests such as H.virescens (lepidoptera), S.exigua (beet armyworm) and M.sexta (tobacco hornworm). This is U1-plectoxin-Pt1c from Plectreurys tristis (Spider).